Reading from the N-terminus, the 421-residue chain is ATP-dependent RNA helicase RhlB (421 aa).

The Q motif motif lies at 9-37 (THFADLPINEQVVKALSAANFSHCTPIQA). Positions 40 to 216 (LPPLLEGNDI…YEHMDNPTHV (177 aa)) constitute a Helicase ATP-binding domain. 53-60 (AQTGTGKT) serves as a coordination point for ATP. Positions 162–165 (DEAD) match the DEAD box motif. Residues 240-387 (KMALLLSLME…VTEYQADALL (148 aa)) enclose the Helicase C-terminal domain. Positions 389–421 (DVTPPKPRHKKRMQNGRNPQKRQSSGSRNRRKP) are disordered. A compositionally biased stretch (polar residues) spans 403–415 (NGRNPQKRQSSGS).

This sequence belongs to the DEAD box helicase family. RhlB subfamily. In terms of assembly, component of the RNA degradosome, which is a multiprotein complex involved in RNA processing and mRNA degradation.

The protein resides in the cytoplasm. It carries out the reaction ATP + H2O = ADP + phosphate + H(+). Its function is as follows. DEAD-box RNA helicase involved in RNA degradation. Has RNA-dependent ATPase activity and unwinds double-stranded RNA. In Pseudoalteromonas atlantica (strain T6c / ATCC BAA-1087), this protein is ATP-dependent RNA helicase RhlB.